The chain runs to 185 residues: Ribosome-recycling factor (185 aa).

Positions 138-160 (AMDKAVKDGEVGEDEGARGEKEL) are disordered.

This sequence belongs to the RRF family.

The protein resides in the cytoplasm. In terms of biological role, responsible for the release of ribosomes from messenger RNA at the termination of protein biosynthesis. May increase the efficiency of translation by recycling ribosomes from one round of translation to another. In Micrococcus luteus (strain ATCC 4698 / DSM 20030 / JCM 1464 / CCM 169 / CCUG 5858 / IAM 1056 / NBRC 3333 / NCIMB 9278 / NCTC 2665 / VKM Ac-2230) (Micrococcus lysodeikticus), this protein is Ribosome-recycling factor.